Here is a 253-residue protein sequence, read N- to C-terminus: Small ribosomal subunit protein eS4 (253 aa).

The 72-residue stretch at 43–114 (LPLLLIVRNV…YPVKFFKLHP (72 aa)) folds into the S4 RNA-binding domain.

This sequence belongs to the eukaryotic ribosomal protein eS4 family.

In Aeropyrum pernix (strain ATCC 700893 / DSM 11879 / JCM 9820 / NBRC 100138 / K1), this protein is Small ribosomal subunit protein eS4 (rps4e).